Reading from the N-terminus, the 149-residue chain is 3-dehydroquinate dehydratase (149 aa).

Tyr-26 acts as the Proton acceptor in catalysis. 3 residues coordinate substrate: Asn-75, His-81, and Asp-88. His-101 (proton donor) is an active-site residue. Residues 102 to 103 (LS) and Arg-112 contribute to the substrate site.

The protein belongs to the type-II 3-dehydroquinase family. As to quaternary structure, homododecamer.

The enzyme catalyses 3-dehydroquinate = 3-dehydroshikimate + H2O. Its pathway is metabolic intermediate biosynthesis; chorismate biosynthesis; chorismate from D-erythrose 4-phosphate and phosphoenolpyruvate: step 3/7. Catalyzes a trans-dehydration via an enolate intermediate. This Shewanella woodyi (strain ATCC 51908 / MS32) protein is 3-dehydroquinate dehydratase.